The following is a 1275-amino-acid chain: Inner capsid protein lambda-1 (1275 aa).

Over residues Met-1–Ser-12 the composition is skewed to basic residues. The tract at residues Met-1–Pro-149 is disordered. Basic and acidic residues-rich tracts occupy residues Asp-18 to Asn-35 and Asn-75 to Lys-117. Positions Ala-118–Pro-149 are enriched in polar residues. The C2H2-type zinc-finger motif lies at Tyr-181–His-203.

This sequence belongs to the orthoreovirus lambda-1 protein family. As to quaternary structure, homodecamer; each decamer is made up of two conformers of VP2, called VP2A and VP2B. 12 homodecamers assemble to form an icosahedral capsid. Interacts with protein mu-NS; in viral inclusions. The cofactor is Mg(2+). It depends on Mn(2+) as a cofactor.

The protein localises to the virion. It catalyses the reaction ATP + H2O = ADP + phosphate + H(+). Inner capsid protein that self-assembles to form an icosahedral capsid with a T=2 symmetry, which consists of 120 copies of VP2, with channels at each of its five-fold vertices. This capsid constitutes the innermost concentric layer of the viral mature particle. In terms of biological role, displays NTPase, RNA 5'-triphosphatase (RTPase) and RNA helicase activities. Helicase activity might be involved in unwinding or reannealing dsRNA during RNA synthesis. RTPase enzymatic activity represents the first step in RNA capping, which yields a 5'-diphosphorylated plus-strand RNA. The chain is Inner capsid protein lambda-1 (L3) from Reovirus type 3 (strain Dearing) (T3D).